We begin with the raw amino-acid sequence, 260 residues long: 23S rRNA (guanosine-2'-O-)-methyltransferase RlmB (260 aa).

Gly197, Ile217, and Leu226 together coordinate S-adenosyl-L-methionine.

This sequence belongs to the class IV-like SAM-binding methyltransferase superfamily. RNA methyltransferase TrmH family. RlmB subfamily.

It localises to the cytoplasm. It catalyses the reaction guanosine(2251) in 23S rRNA + S-adenosyl-L-methionine = 2'-O-methylguanosine(2251) in 23S rRNA + S-adenosyl-L-homocysteine + H(+). Functionally, specifically methylates the ribose of guanosine 2251 in 23S rRNA. This chain is 23S rRNA (guanosine-2'-O-)-methyltransferase RlmB, found in Nitrosomonas europaea (strain ATCC 19718 / CIP 103999 / KCTC 2705 / NBRC 14298).